The following is a 444-amino-acid chain: Chromosome partition protein MukF (444 aa).

Residues 212–240 (LDETSGNLRELQDTLNAAGDKLQAQLLRI) are leucine-zipper.

This sequence belongs to the MukF family. In terms of assembly, interacts, and probably forms a ternary complex, with MukE and MukB via its C-terminal region. The complex formation is stimulated by calcium or magnesium. It is required for an interaction between MukE and MukB.

It localises to the cytoplasm. The protein resides in the nucleoid. Involved in chromosome condensation, segregation and cell cycle progression. May participate in facilitating chromosome segregation by condensation DNA from both sides of a centrally located replisome during cell division. Not required for mini-F plasmid partitioning. Probably acts via its interaction with MukB and MukE. Overexpression results in anucleate cells. It has a calcium binding activity. In Haemophilus influenzae (strain ATCC 51907 / DSM 11121 / KW20 / Rd), this protein is Chromosome partition protein MukF.